Consider the following 50-residue polypeptide: Large ribosomal subunit protein eL39 (50 aa).

A compositionally biased stretch (basic residues) spans 1–12; the sequence is MGKKSKAKKKRL. Residues 1–21 form a disordered region; that stretch reads MGKKSKAKKKRLGKLEKQNSR.

This sequence belongs to the eukaryotic ribosomal protein eL39 family.

The polypeptide is Large ribosomal subunit protein eL39 (Haloquadratum walsbyi (strain DSM 16790 / HBSQ001)).